A 721-amino-acid polypeptide reads, in one-letter code: Polyribonucleotide nucleotidyltransferase (721 aa).

Mg(2+) contacts are provided by D495 and D501. In terms of domain architecture, KH spans 562 to 621 (PRLLSFRIDPELIGTVIGPGGRTIKGITERTNTKIDIEDGGIVTIASHDGAAAEEAQKII). In terms of domain architecture, S1 motif spans 631–699 (GEIFSGVVTR…SRGRINLTLR (69 aa)). Residues 701–721 (VGQNNGMSYPEPTPTPVAPLN) are disordered. Residues 711–721 (EPTPTPVAPLN) are compositionally biased toward pro residues.

The protein belongs to the polyribonucleotide nucleotidyltransferase family. Requires Mg(2+) as cofactor.

The protein localises to the cytoplasm. It carries out the reaction RNA(n+1) + phosphate = RNA(n) + a ribonucleoside 5'-diphosphate. In terms of biological role, involved in mRNA degradation. Catalyzes the phosphorolysis of single-stranded polyribonucleotides processively in the 3'- to 5'-direction. This is Polyribonucleotide nucleotidyltransferase from Prochlorococcus marinus (strain MIT 9215).